The following is a 225-amino-acid chain: ATP synthase F(0) complex subunit a (225 aa).

6 helical membrane passes run proline 10–leucine 30, leucine 69–tyrosine 89, glutamine 96–leucine 116, leucine 135–leucine 155, leucine 168–serine 188, and valine 194–valine 214.

Belongs to the ATPase A chain family. As to quaternary structure, component of the ATP synthase complex composed at least of ATP5F1A/subunit alpha, ATP5F1B/subunit beta, ATP5MC1/subunit c (homooctomer), MT-ATP6/subunit a, MT-ATP8/subunit 8, ATP5ME/subunit e, ATP5MF/subunit f, ATP5MG/subunit g, ATP5MK/subunit k, ATP5MJ/subunit j, ATP5F1C/subunit gamma, ATP5F1D/subunit delta, ATP5F1E/subunit epsilon, ATP5PF/subunit F6, ATP5PB/subunit b, ATP5PD/subunit d, ATP5PO/subunit OSCP. ATP synthase complex consists of a soluble F(1) head domain (subunits alpha(3) and beta(3)) - the catalytic core - and a membrane F(0) domain - the membrane proton channel (subunits c, a, 8, e, f, g, k and j). These two domains are linked by a central stalk (subunits gamma, delta, and epsilon) rotating inside the F1 region and a stationary peripheral stalk (subunits F6, b, d, and OSCP). Interacts with DNAJC30; interaction is direct.

It is found in the mitochondrion inner membrane. The enzyme catalyses H(+)(in) = H(+)(out). Functionally, subunit a, of the mitochondrial membrane ATP synthase complex (F(1)F(0) ATP synthase or Complex V) that produces ATP from ADP in the presence of a proton gradient across the membrane which is generated by electron transport complexes of the respiratory chain. ATP synthase complex consist of a soluble F(1) head domain - the catalytic core - and a membrane F(1) domain - the membrane proton channel. These two domains are linked by a central stalk rotating inside the F(1) region and a stationary peripheral stalk. During catalysis, ATP synthesis in the catalytic domain of F(1) is coupled via a rotary mechanism of the central stalk subunits to proton translocation. With the subunit c (ATP5MC1), forms the proton-conducting channel in the F(0) domain, that contains two crucial half-channels (inlet and outlet) that facilitate proton movement from the mitochondrial intermembrane space (IMS) into the matrix. Protons are taken up via the inlet half-channel and released through the outlet half-channel, following a Grotthuss mechanism. This is ATP synthase F(0) complex subunit a from Alligator mississippiensis (American alligator).